The following is a 324-amino-acid chain: AT-hook motif nuclear-localized protein 24 (324 aa).

Residues 1–12 (MDPVQSHGSQSS) are compositionally biased toward polar residues. Disordered regions lie at residues 1 to 122 (MDPV…KPPI) and 262 to 324 (MQTP…RPPY). A compositionally biased stretch (low complexity) spans 24-33 (LHLQQQQQEF). Residues 69–79 (NIDNIANNSGS) show a composition bias toward polar residues. A compositionally biased stretch (gly residues) spans 88–99 (GGSGEGGGGSGG). Positions 105 to 117 (RRPRGRPAGSKNK) form a DNA-binding region, a.T hook. Residues 129-268 (ANALRTHVME…EDEMQTPVHG (140 aa)) enclose the PPC domain. Residues 280–297 (MMGQQLQHQQQAMSGHQG) are compositionally biased toward low complexity. The segment covering 304-318 (GSVQLQQQHDQSYWS) has biased composition (polar residues).

The protein resides in the nucleus. In terms of biological role, transcription factor that specifically binds AT-rich DNA sequences related to the nuclear matrix attachment regions (MARs). The polypeptide is AT-hook motif nuclear-localized protein 24 (Arabidopsis thaliana (Mouse-ear cress)).